A 567-amino-acid polypeptide reads, in one-letter code: Hydrogenase-2 large chain (567 aa).

The Ni(2+) site is built by C61, C64, C546, and C549. A propeptide spanning residues 553–567 (VVDADGNEVVSVKVL) is cleaved from the precursor.

The protein belongs to the [NiFe]/[NiFeSe] hydrogenase large subunit family. In terms of assembly, heterodimer of a large and a small subunit. The cofactor is Ni(2+).

The protein localises to the cell membrane. The catalysed reaction is H2 + A = AH2. Its function is as follows. This is one of three E.coli hydrogenases synthesized in response to different physiological conditions. HYD2 is involved in hydrogen uptake. The chain is Hydrogenase-2 large chain (hybC) from Escherichia coli O157:H7.